The following is a 425-amino-acid chain: Enolase (425 aa).

Gln-162 provides a ligand contact to (2R)-2-phosphoglycerate. Glu-204 (proton donor) is an active-site residue. Asp-241, Glu-282, and Asp-309 together coordinate Mg(2+). 4 residues coordinate (2R)-2-phosphoglycerate: Lys-334, Arg-363, Ser-364, and Lys-385. The active-site Proton acceptor is Lys-334.

The protein belongs to the enolase family. The cofactor is Mg(2+).

The protein resides in the cytoplasm. The protein localises to the secreted. Its subcellular location is the cell surface. It catalyses the reaction (2R)-2-phosphoglycerate = phosphoenolpyruvate + H2O. It participates in carbohydrate degradation; glycolysis; pyruvate from D-glyceraldehyde 3-phosphate: step 4/5. Catalyzes the reversible conversion of 2-phosphoglycerate (2-PG) into phosphoenolpyruvate (PEP). It is essential for the degradation of carbohydrates via glycolysis. This is Enolase from Corynebacterium jeikeium (strain K411).